Reading from the N-terminus, the 483-residue chain is Glutamate--tRNA ligase 1 (483 aa).

The 'HIGH' region motif lies at 9 to 19 (PSPTGFLHIGG). The short motif at 238–242 (KLSKR) is the 'KMSKS' region element. Lys241 serves as a coordination point for ATP.

This sequence belongs to the class-I aminoacyl-tRNA synthetase family. Glutamate--tRNA ligase type 1 subfamily. Monomer.

The protein localises to the cytoplasm. The enzyme catalyses tRNA(Glu) + L-glutamate + ATP = L-glutamyl-tRNA(Glu) + AMP + diphosphate. Functionally, catalyzes the attachment of glutamate to tRNA(Glu) in a two-step reaction: glutamate is first activated by ATP to form Glu-AMP and then transferred to the acceptor end of tRNA(Glu). This chain is Glutamate--tRNA ligase 1, found in Bartonella henselae (strain ATCC 49882 / DSM 28221 / CCUG 30454 / Houston 1) (Rochalimaea henselae).